Here is a 478-residue protein sequence, read N- to C-terminus: Abscisate beta-glucosyltransferase (478 aa).

H20 functions as the Proton acceptor in the catalytic mechanism. H20 lines the an anthocyanidin pocket. D108 serves as the catalytic Charge relay. Residues A340, Q342, H357, W360, N361, S362, and E365 each contribute to the UDP-alpha-D-glucose site. A380 is an an anthocyanidin binding site. Positions 381 and 382 each coordinate UDP-alpha-D-glucose.

It belongs to the UDP-glycosyltransferase family.

It catalyses the reaction 2-cis-(+)-abscisate + UDP-alpha-D-glucose = beta-D-glucopyranosyl cis-(+)-abscisate + UDP. In terms of biological role, glucosyltransferase involved in the catabolism of abscisic acid (ABA). Adds a glucosyl group at the C-1 position of ABA; (S)-2-trans-abscisate is a better substrate than the natural (+)-S-abscisate or its enantiomer (-)-R-abscisate. No activity with (-)-phaseic acid (PA), methylated-ABA or with other hormones such as jasmonate, zeatin, auxin (IAA) or gibberellin A3 (GA3). This chain is Abscisate beta-glucosyltransferase (AOG), found in Phaseolus angularis (Azuki bean).